Reading from the N-terminus, the 63-residue chain is Cytochrome c oxidase subunit 7C, mitochondrial (63 aa).

The N-terminal 16 residues, 1 to 16, are a transit peptide targeting the mitochondrion; sequence MLGQSIRRFTTSVVRR. Residues 17–33 are Mitochondrial matrix-facing; it reads SHYEEGPGKNLPFSVEN. Lysine 25 is modified (N6-acetyllysine; alternate). Position 25 is an N6-succinyllysine; alternate (lysine 25). A helical transmembrane segment spans residues 34 to 60; sequence KWRLLAMMTLYFGSGFAAPFFIVRHQL. At 61–63 the chain is on the mitochondrial intermembrane side; sequence LKK.

Belongs to the cytochrome c oxidase VIIc family. Component of the cytochrome c oxidase (complex IV, CIV), a multisubunit enzyme composed of 14 subunits. The complex is composed of a catalytic core of 3 subunits MT-CO1, MT-CO2 and MT-CO3, encoded in the mitochondrial DNA, and 11 supernumerary subunits COX4I, COX5A, COX5B, COX6A, COX6B, COX6C, COX7A, COX7B, COX7C, COX8 and NDUFA4, which are encoded in the nuclear genome. The complex exists as a monomer or a dimer and forms supercomplexes (SCs) in the inner mitochondrial membrane with NADH-ubiquinone oxidoreductase (complex I, CI) and ubiquinol-cytochrome c oxidoreductase (cytochrome b-c1 complex, complex III, CIII), resulting in different assemblies (supercomplex SCI(1)III(2)IV(1) and megacomplex MCI(2)III(2)IV(2)). Interacts with RAB5IF.

The protein resides in the mitochondrion inner membrane. Its pathway is energy metabolism; oxidative phosphorylation. Its function is as follows. Component of the cytochrome c oxidase, the last enzyme in the mitochondrial electron transport chain which drives oxidative phosphorylation. The respiratory chain contains 3 multisubunit complexes succinate dehydrogenase (complex II, CII), ubiquinol-cytochrome c oxidoreductase (cytochrome b-c1 complex, complex III, CIII) and cytochrome c oxidase (complex IV, CIV), that cooperate to transfer electrons derived from NADH and succinate to molecular oxygen, creating an electrochemical gradient over the inner membrane that drives transmembrane transport and the ATP synthase. Cytochrome c oxidase is the component of the respiratory chain that catalyzes the reduction of oxygen to water. Electrons originating from reduced cytochrome c in the intermembrane space (IMS) are transferred via the dinuclear copper A center (CU(A)) of subunit 2 and heme A of subunit 1 to the active site in subunit 1, a binuclear center (BNC) formed by heme A3 and copper B (CU(B)). The BNC reduces molecular oxygen to 2 water molecules using 4 electrons from cytochrome c in the IMS and 4 protons from the mitochondrial matrix. In Sus scrofa (Pig), this protein is Cytochrome c oxidase subunit 7C, mitochondrial (COX7C).